The following is a 201-amino-acid chain: Cytochrome c oxidase assembly protein CtaG (201 aa).

Topologically, residues 1-13 (MTDQGENEKKQRR) are cytoplasmic. Residues 14–36 (SNATIAVACLSFFVCMIGAAYAS) traverse the membrane as a helical; Signal-anchor for type II membrane protein segment. Over 37–201 (VPLYRIFCQV…KAVGSTRNGG (165 aa)) the chain is Periplasmic.

Belongs to the COX11/CtaG family.

The protein localises to the cell inner membrane. Its function is as follows. Exerts its effect at some terminal stage of cytochrome c oxidase synthesis, probably by being involved in the insertion of the copper B into subunit I. The protein is Cytochrome c oxidase assembly protein CtaG of Brucella suis (strain ATCC 23445 / NCTC 10510).